The sequence spans 921 residues: Isoleucine--tRNA ligase (921 aa).

A 'HIGH' region motif is present at residues 57–67 (PYANGNIHVGT). L-isoleucyl-5'-AMP is bound at residue glutamate 551. The 'KMSKS' region motif lies at 592-596 (KMSKS). Lysine 595 serves as a coordination point for ATP. Positions 885, 888, 905, and 908 each coordinate Zn(2+).

The protein belongs to the class-I aminoacyl-tRNA synthetase family. IleS type 1 subfamily. Monomer. Zn(2+) is required as a cofactor.

Its subcellular location is the cytoplasm. The catalysed reaction is tRNA(Ile) + L-isoleucine + ATP = L-isoleucyl-tRNA(Ile) + AMP + diphosphate. In terms of biological role, catalyzes the attachment of isoleucine to tRNA(Ile). As IleRS can inadvertently accommodate and process structurally similar amino acids such as valine, to avoid such errors it has two additional distinct tRNA(Ile)-dependent editing activities. One activity is designated as 'pretransfer' editing and involves the hydrolysis of activated Val-AMP. The other activity is designated 'posttransfer' editing and involves deacylation of mischarged Val-tRNA(Ile). The protein is Isoleucine--tRNA ligase of Kosmotoga olearia (strain ATCC BAA-1733 / DSM 21960 / TBF 19.5.1).